Consider the following 401-residue polypeptide: Collagen and calcium-binding EGF domain-containing protein 1 (401 aa).

An N-terminal signal peptide occupies residues 1–22; that stretch reads MIYPGRGASLSVAVALVLFSSG. One can recognise an EGF-like; calcium-binding domain in the interval 126-167; the sequence is DIDECANNNETVCSQMCVNTPGSYRCDCHSGFYLEDDGKTCT. 3 disulfide bridges follow: C130–C142, C138–C151, and C153–C166. N-linked (GlcNAc...) asparagine glycosylation is present at N134. Disordered regions lie at residues 229–321 and 344–401; these read TTNS…PGSF and SRPL…DWPV. Collagen-like domains follow at residues 234–276 and 286–319; these read LPGP…PIGP and GRRG…GPPG. Residues 235–244 are compositionally biased toward pro residues; the sequence is PGPPGPPGPA. Residues 246 to 258 are compositionally biased toward low complexity; the sequence is TPGAKGSSGSPGQ.

The protein belongs to the CCBE1 family. As to expression, not expressed in blood or lymphatic endothelial cells, correlating spatially and temporally with the migration routes of endothelial cells that bud from the PCV, migrate in association with somite boundaries and seed the horizontal myoseptum region from where lymphatic precursors later migrate.

It is found in the secreted. Required for lymphangioblast budding and angiogenic sprouting from venous endothelium during embryogenesis. Required for the formation of facial lymphatic structures. Necessary for lymphangiogenesis, but is probably not part of either the vegfc-vegfr3 signaling or sox18-prox1 transcriptional pathways. The polypeptide is Collagen and calcium-binding EGF domain-containing protein 1 (ccbe1) (Danio rerio (Zebrafish)).